Consider the following 79-residue polypeptide: Acyl carrier protein 1 (79 aa).

In terms of domain architecture, Carrier spans 2–77; the sequence is DNIEQRVKKI…QAIDYARANV (76 aa). An O-(pantetheine 4'-phosphoryl)serine modification is found at Ser37.

This sequence belongs to the acyl carrier protein (ACP) family. In terms of processing, 4'-phosphopantetheine is transferred from CoA to a specific serine of apo-ACP by AcpS. This modification is essential for activity because fatty acids are bound in thioester linkage to the sulfhydryl of the prosthetic group.

It is found in the cytoplasm. The protein operates within lipid metabolism; fatty acid biosynthesis. Its function is as follows. Carrier of the growing fatty acid chain in fatty acid biosynthesis. This chain is Acyl carrier protein 1, found in Ralstonia nicotianae (strain ATCC BAA-1114 / GMI1000) (Ralstonia solanacearum).